We begin with the raw amino-acid sequence, 1214 residues long: Ubiquitin carboxyl-terminal hydrolase 36 (1214 aa).

The disordered stretch occupies residues 124 to 169 (AVGSNGHDNNTVNGGTVNGNRKQTVDSGQSNQNSSANPNELPKPKR). Positions 132 to 143 (NNTVNGGTVNGN) are enriched in low complexity. Residues 144-161 (RKQTVDSGQSNQNSSANP) are compositionally biased toward polar residues. The 311-residue stretch at 192 to 502 (AGMLNVGNTC…NAYIMFYELD (311 aa)) folds into the USP domain. The Nucleophile role is filled by Cys201. His461 functions as the Proton acceptor in the catalytic mechanism. Residues 509–523 (SSTINNNSSSSSNNS) are compositionally biased toward low complexity. Residues 509-532 (SSTINNNSSSSSNNSVAPKLNGLR) are disordered. 2 positions are modified to phosphoserine: Ser553 and Ser555. Disordered regions lie at residues 631-819 (GEAA…KQKT), 836-964 (HRIA…ASKS), 977-1001 (QKLL…SESV), 1048-1161 (HGDT…PNFQ), and 1176-1214 (KFQQ…QQQS). Residues 633 to 651 (AAPNANTNANANKSSCNNN) show a composition bias toward low complexity. Positions 666–685 (SDEDEDEDDSDDDDDDDDDD) are enriched in acidic residues. Residue Thr717 is modified to Phosphothreonine. Phosphoserine is present on residues Ser727 and Ser729. Low complexity-rich tracts occupy residues 735-751 (QQQQ…PQQL) and 785-816 (KTNG…NSSK). Residues 856 to 868 (EQVQTEQGTKKLN) show a composition bias toward polar residues. Residues 869 to 878 (SASSASASKS) are compositionally biased toward low complexity. Ser891 carries the phosphoserine modification. Thr894 is subject to Phosphothreonine. Ser897 carries the phosphoserine modification. A compositionally biased stretch (acidic residues) spans 915-942 (DDDDEEDEEEDDVEADADQEDDDDEVVV). At Thr951 the chain carries Phosphothreonine. Positions 983–1001 (SAKSAATTRPGNGYQSESV) are enriched in polar residues. A compositionally biased stretch (low complexity) spans 1058–1076 (NSSSNNSSNINSNSNSNSN). Residues 1089-1098 (EAREQRKRDA) show a composition bias toward basic and acidic residues. Composition is skewed to low complexity over residues 1178 to 1188 (QQQRALQRHLA) and 1197 to 1214 (QQQS…QQQS).

It belongs to the peptidase C19 family. In terms of assembly, interacts with atms/PAF1, but not with CycT.

It is found in the nucleus. It localises to the nucleolus. It catalyses the reaction Thiol-dependent hydrolysis of ester, thioester, amide, peptide and isopeptide bonds formed by the C-terminal Gly of ubiquitin (a 76-residue protein attached to proteins as an intracellular targeting signal).. In terms of biological role, required for maintaining multiple types of adult stem cells, including male and female germline, epithelial follicle cell and intestinal stem cells. May function as a transcriptional repressor by continually deubiquiting histone H2B at the promoters of genes critical for cellular differentiation, thereby preventing histone H3 'Lys-4' trimethylation (H3K4). Controls selective autophagy activation by ubiquitinated proteins. This Drosophila virilis (Fruit fly) protein is Ubiquitin carboxyl-terminal hydrolase 36 (Usp36).